The sequence spans 322 residues: Malate dehydrogenase (322 aa).

NAD(+) contacts are provided by residues 10–15 and aspartate 34; that span reads GSGQIG. Arginine 83 and arginine 89 together coordinate substrate. Residues asparagine 96 and 119–121 contribute to the NAD(+) site; that span reads ITN. Residues asparagine 121 and arginine 152 each contribute to the substrate site. The active-site Proton acceptor is histidine 176.

Belongs to the LDH/MDH superfamily. MDH type 3 family.

It carries out the reaction (S)-malate + NAD(+) = oxaloacetate + NADH + H(+). Functionally, catalyzes the reversible oxidation of malate to oxaloacetate. The chain is Malate dehydrogenase from Nitrobacter hamburgensis (strain DSM 10229 / NCIMB 13809 / X14).